A 268-amino-acid chain; its full sequence is Hydroxyethylthiazole kinase (268 aa).

Methionine 46 is a substrate binding site. ATP is bound by residues arginine 122 and threonine 168. Substrate is bound at residue glycine 195.

The protein belongs to the Thz kinase family. Requires Mg(2+) as cofactor.

It carries out the reaction 5-(2-hydroxyethyl)-4-methylthiazole + ATP = 4-methyl-5-(2-phosphooxyethyl)-thiazole + ADP + H(+). It participates in cofactor biosynthesis; thiamine diphosphate biosynthesis; 4-methyl-5-(2-phosphoethyl)-thiazole from 5-(2-hydroxyethyl)-4-methylthiazole: step 1/1. Its function is as follows. Catalyzes the phosphorylation of the hydroxyl group of 4-methyl-5-beta-hydroxyethylthiazole (THZ). This chain is Hydroxyethylthiazole kinase, found in Desulfatibacillum aliphaticivorans.